The sequence spans 173 residues: MVDSTLIKDSTDTSVAEPVIKPHLILALDYGVKKMGMALGNSLTETARAFDILAMNNGQPDWDNLLGIIKVWGVAKVVVGLPLNMDGSSSMLSKRAHKFARRLAHRIMEQHLPVIVSLCDERLTSVAAREIAWENGWIKHERAPIDDISACILMSTYFADPHSSIAIDAIKAD.

It belongs to the YqgF nuclease family.

Its subcellular location is the cytoplasm. Functionally, could be a nuclease involved in processing of the 5'-end of pre-16S rRNA. In Psychrobacter cryohalolentis (strain ATCC BAA-1226 / DSM 17306 / VKM B-2378 / K5), this protein is Putative pre-16S rRNA nuclease.